Consider the following 221-residue polypeptide: Leucine rich adaptor protein 1-like (221 aa).

Methionine 1 carries the post-translational modification N-acetylmethionine. A disordered region spans residues 1-81; that stretch reads MEDGPLPDLR…SGSPRRSHPS (81 aa). 2 stretches are compositionally biased toward basic and acidic residues: residues 8 to 21 and 28 to 39; these read DLRD…RKVP and LRGEEPAPREGA. Low complexity predominate over residues 48–75; sequence SCSSSSSCSSFAPSVSSSSSSSPASGSP.

The sequence is that of Leucine rich adaptor protein 1-like (Lurap1l) from Rattus norvegicus (Rat).